A 141-amino-acid polypeptide reads, in one-letter code: Small ribosomal subunit protein uS8 (141 aa).

Belongs to the universal ribosomal protein uS8 family. In terms of assembly, part of the 30S ribosomal subunit. Contacts proteins S5 and S12.

Functionally, one of the primary rRNA binding proteins, it binds directly to 16S rRNA central domain where it helps coordinate assembly of the platform of the 30S subunit. The chain is Small ribosomal subunit protein uS8 from Mycoplasma genitalium (strain ATCC 33530 / DSM 19775 / NCTC 10195 / G37) (Mycoplasmoides genitalium).